The following is a 680-amino-acid chain: uncharacterized protein (680 aa).

This sequence belongs to the HyuA family.

This is an uncharacterized protein from Methanocaldococcus jannaschii (strain ATCC 43067 / DSM 2661 / JAL-1 / JCM 10045 / NBRC 100440) (Methanococcus jannaschii).